A 222-amino-acid polypeptide reads, in one-letter code: Ethylene-inducing xylanase 2 (222 aa).

The N-terminal stretch at 1 to 19 is a signal peptide; it reads MITFSSLLVTFSAISTSLA. One can recognise a GH11 domain in the interval 36-222; it reads QRNESSLVRR…GEGAATQTVS (187 aa). Residues Asn-38 and Asn-94 are each glycosylated (N-linked (GlcNAc...) asparagine). The active-site Nucleophile is the Glu-120. The Proton donor role is filled by Glu-209.

This sequence belongs to the glycosyl hydrolase 11 (cellulase G) family.

The enzyme catalyses Endohydrolysis of (1-&gt;4)-beta-D-xylosidic linkages in xylans.. The protein operates within glycan degradation; xylan degradation. Its function is as follows. Endo-1,4-beta-xylanase involved in the hydrolysis of xylan, a major structural heterogeneous polysaccharide found in plant biomass representing the second most abundant polysaccharide in the biosphere, after cellulose. May act as an elicitor of plant defense responses in certain plants but does not exhibit any cell death when transiently expressed in N.benthamiana. This Botryotinia fuckeliana (strain B05.10) (Noble rot fungus) protein is Ethylene-inducing xylanase 2.